The following is a 201-amino-acid chain: Protein Thf1 (201 aa).

Residues Ile174–Leu201 are a coiled coil.

This sequence belongs to the THF1 family.

Functionally, may be involved in photosynthetic membrane biogenesis. The chain is Protein Thf1 from Prochlorococcus marinus (strain MIT 9312).